Here is a 152-residue protein sequence, read N- to C-terminus: 3-hydroxyacyl-[acyl-carrier-protein] dehydratase FabZ (152 aa).

Residue His58 is part of the active site.

It belongs to the thioester dehydratase family. FabZ subfamily.

The protein localises to the cytoplasm. It catalyses the reaction a (3R)-hydroxyacyl-[ACP] = a (2E)-enoyl-[ACP] + H2O. Functionally, involved in unsaturated fatty acids biosynthesis. Catalyzes the dehydration of short chain beta-hydroxyacyl-ACPs and long chain saturated and unsaturated beta-hydroxyacyl-ACPs. This is 3-hydroxyacyl-[acyl-carrier-protein] dehydratase FabZ from Prochlorococcus marinus (strain MIT 9301).